The primary structure comprises 172 residues: Centrin-1 (172 aa).

A disordered region spans residues 1–31; it reads MASGFKKPSAASTGQKRKVAPKPELTEDQKQ. EF-hand domains are found at residues 28–63, 64–99, 101–136, and 137–172; these read DQKQEVREAFDLFDVDGSGTIDAKELKVAMRALGFE, PRKEEMKKMISEVDREGTGKISFNDFLAVMTQKMSE, DTKEEILKAFRLFDDDETGKISFKNLKRVANELGEN, and LTDEELQEMIDEADRDGDGEVNEEEFLRIMKKTSLY. Ca(2+) contacts are provided by D41, D43, S45, T47, and E52. 5 residues coordinate Ca(2+): D150, D152, D154, E156, and E161.

It belongs to the centrin family. Monomer. Interacts with CIMAP3. Interacts with USP49.

Its subcellular location is the cytoplasm. The protein resides in the cytoskeleton. It localises to the microtubule organizing center. The protein localises to the centrosome. It is found in the cell projection. Its subcellular location is the cilium. Functionally, plays a fundamental role in microtubule-organizing center structure and function. Plays a role in sperm cilia formation. This Homo sapiens (Human) protein is Centrin-1.